We begin with the raw amino-acid sequence, 118 residues long: Ribonuclease P protein component (118 aa).

Belongs to the RnpA family. In terms of assembly, consists of a catalytic RNA component (M1 or rnpB) and a protein subunit.

It carries out the reaction Endonucleolytic cleavage of RNA, removing 5'-extranucleotides from tRNA precursor.. Its function is as follows. RNaseP catalyzes the removal of the 5'-leader sequence from pre-tRNA to produce the mature 5'-terminus. It can also cleave other RNA substrates such as 4.5S RNA. The protein component plays an auxiliary but essential role in vivo by binding to the 5'-leader sequence and broadening the substrate specificity of the ribozyme. This chain is Ribonuclease P protein component, found in Shewanella amazonensis (strain ATCC BAA-1098 / SB2B).